The following is a 607-amino-acid chain: Chaperone protein HtpG (607 aa).

Residues 1–323 (MKKEEKIFKA…CDSLSLNISR (323 aa)) form an a; substrate-binding region. Residues 324 to 534 (EILQQNAELQ…KGGLSLEMEK (211 aa)) are b. The interval 535 to 607 (TLSEMTNNND…FIKNLNSLIK (73 aa)) is c.

It belongs to the heat shock protein 90 family. As to quaternary structure, homodimer.

Its subcellular location is the cytoplasm. Its function is as follows. Molecular chaperone. Has ATPase activity. This is Chaperone protein HtpG from Fusobacterium nucleatum subsp. nucleatum (strain ATCC 25586 / DSM 15643 / BCRC 10681 / CIP 101130 / JCM 8532 / KCTC 2640 / LMG 13131 / VPI 4355).